A 211-amino-acid polypeptide reads, in one-letter code: Mitotic spindle assembly checkpoint protein MAD2B (211 aa).

An HORMA domain is found at 13 to 203; it reads QVVADVLCEF…SDILKMQLYV (191 aa). Positions 21-155 are mediates interaction with REV1 and REV3L and homodimerization; the sequence is EFLEVAVHLI…FTVLVHTREA (135 aa). The segment at 150–211 is mediates interaction with ipaB; sequence VHTREAATRN…YVEERAHKGS (62 aa).

As to quaternary structure, homooligomer. Heterodimer with REV3L. This dimer forms the minimal DNA polymerase zeta complex (Pol-zeta2), with REV3L bearing DNA polymerase catalytic activity, although its activity is very low in this context. Component of the tetrameric Pol-zeta complex (Pol-zeta4), which consists of REV3L, MAD2L2, POLD2 and POLD3; Pol-zeta4 is the fully active form of DNA polymerase zeta. Component of the shieldin complex, consisting of SHLD1, SHLD2, SHLD3 and MAD2L2/REV7. Within the complex, SHLD2 forms a scaffold which interacts with a SHLD3-MAD2L2 subcomplex via its N-terminus, and with SHLD1 via its C-terminus. Interacts with REV1. Interacts with ADAM9. Interacts with CHAMP1. Interacts with FZR1 (in complex with the anaphase promoting complex APC). Interacts with CDC20; PubMed:11459825 could not detect the interaction. Interacts with RAN. Interacts with ELK1; the interaction is direct and recruits MAD2L2 to ELK1-specific promoters. May interact with the JNK kinases MAPK8 and/or MAPK9 to stimulate ELK1 phosphorylation and transcriptional activity upon DNA damage. Interacts with TCF7L2; prevents its binding to promoters and negatively modulates its transcriptional activity. Interacts with YY1AP1. Interacts with S.flexneri protein ipaB; prevents the interaction of MAD2L2 with FZR1 and CDC20 resulting in an activation of the anaphase-promoting complex APC and a cell cycle arrest. Interacts with PRCC; the interaction is direct. Interacts with POGZ. Interacts with ASTE1. As to expression, ubiquitously expressed.

It localises to the nucleus. It is found in the cytoplasm. The protein localises to the cytoskeleton. Its subcellular location is the spindle. The protein resides in the chromosome. Its function is as follows. Adapter protein able to interact with different proteins and involved in different biological processes. Mediates the interaction between the error-prone DNA polymerase zeta catalytic subunit REV3L and the inserter polymerase REV1, thereby mediating the second polymerase switching in translesion DNA synthesis. Translesion DNA synthesis releases the replication blockade of replicative polymerases, stalled in presence of DNA lesions. Component of the shieldin complex, which plays an important role in repair of DNA double-stranded breaks (DSBs). During G1 and S phase of the cell cycle, the complex functions downstream of TP53BP1 to promote non-homologous end joining (NHEJ) and suppress DNA end resection. Mediates various NHEJ-dependent processes including immunoglobulin class-switch recombination, and fusion of unprotected telomeres. May also regulate another aspect of cellular response to DNA damage through regulation of the JNK-mediated phosphorylation and activation of the transcriptional activator ELK1. Inhibits the FZR1- and probably CDC20-mediated activation of the anaphase promoting complex APC thereby regulating progression through the cell cycle. Regulates TCF7L2-mediated gene transcription and may play a role in epithelial-mesenchymal transdifferentiation. The protein is Mitotic spindle assembly checkpoint protein MAD2B (MAD2L2) of Homo sapiens (Human).